Consider the following 326-residue polypeptide: uncharacterized protein (326 aa).

An ATP-binding site is contributed by 127–134 (GATGSGKS).

It belongs to the GSP E family.

This is an uncharacterized protein from Escherichia coli (strain K12).